A 281-amino-acid chain; its full sequence is Phosphatidylglycerol--prolipoprotein diacylglyceryl transferase (281 aa).

7 helical membrane-spanning segments follow: residues 11–31, 57–77, 89–109, 121–141, 194–214, 222–242, and 255–275; these read IIFTIGPVSARWYGFMYVISF, LLYSIFLGSCIGGRIGYIIFY, VFYIWEGGMSFHGGLIGAIIV, ILEISDFITPLIPFGLGAGRI, PTQLYEFFLEGILLFFIIYFF, GSISGLFLIFYGLFRIFIEFF, and IITMGQILSLPMIIAGLIIMY. Arg140 provides a ligand contact to a 1,2-diacyl-sn-glycero-3-phospho-(1'-sn-glycerol).

The protein belongs to the Lgt family.

It localises to the cell inner membrane. The enzyme catalyses L-cysteinyl-[prolipoprotein] + a 1,2-diacyl-sn-glycero-3-phospho-(1'-sn-glycerol) = an S-1,2-diacyl-sn-glyceryl-L-cysteinyl-[prolipoprotein] + sn-glycerol 1-phosphate + H(+). The protein operates within protein modification; lipoprotein biosynthesis (diacylglyceryl transfer). Catalyzes the transfer of the diacylglyceryl group from phosphatidylglycerol to the sulfhydryl group of the N-terminal cysteine of a prolipoprotein, the first step in the formation of mature lipoproteins. The protein is Phosphatidylglycerol--prolipoprotein diacylglyceryl transferase of Buchnera aphidicola subsp. Acyrthosiphon pisum (strain 5A).